The primary structure comprises 398 residues: MNPVIFLVDMNAFFISCEMTRNSKLIGIPAAVAGNPQNRTGIVLAANYEARRFGVKTAMTLNNALKLCPTMTVVPPDHRFYRQKSSEVMNLLSKYTPIIEQSSIDEAWLDMTGTENLFGKPADAAKLIMEDIKENLGLWCSIGISEGKFLSKMASDMKKPLGITELWKRDIQTKLWPLSIKSMHGVGAKTYEKLHSLGIETIGDFANLKKDDAHQILGKFGLDLYHHAHGIDTTPVQVISPDDMKSIGRSTTLPEDLVDIEQLKYILLTLCEDIGRSARKHNKRGRTVNLTLKSSDFKVIHRQVTIKATFNTMEIYEAGYHLLKLHLNPKIPIRLIGVSISGFEDTSVPEQISIFNMDEFNKRDTIGNNRNEKIDMVMDSIRNKYGSDKISRASLIIK.

A UmuC domain is found at 5–187; that stretch reads IFLVDMNAFF…LSIKSMHGVG (183 aa). Positions 9 and 105 each coordinate Mg(2+). The active site involves E106.

This sequence belongs to the DNA polymerase type-Y family. As to quaternary structure, monomer. Mg(2+) is required as a cofactor.

It is found in the cytoplasm. The catalysed reaction is DNA(n) + a 2'-deoxyribonucleoside 5'-triphosphate = DNA(n+1) + diphosphate. Poorly processive, error-prone DNA polymerase involved in untargeted mutagenesis. Copies undamaged DNA at stalled replication forks, which arise in vivo from mismatched or misaligned primer ends. These misaligned primers can be extended by PolIV. Exhibits no 3'-5' exonuclease (proofreading) activity. May be involved in translesional synthesis, in conjunction with the beta clamp from PolIII. In Alkaliphilus oremlandii (strain OhILAs) (Clostridium oremlandii (strain OhILAs)), this protein is DNA polymerase IV.